The following is a 132-amino-acid chain: MTNDTVSDMLTRVRNANLAKHQVVQVPATKMTKSIAHVLLEEGFIESIEEVGLDINRQLLLSLKYKGREREPVINALKRISRPGLRVYANRKELPRVLGGLGIAVISTSKGVLTDTKARTQGLGGEVLCYIW.

The protein belongs to the universal ribosomal protein uS8 family. As to quaternary structure, part of the 30S ribosomal subunit.

The protein resides in the plastid. The protein localises to the chloroplast. Its function is as follows. One of the primary rRNA binding proteins, it binds directly to 16S rRNA central domain where it helps coordinate assembly of the platform of the 30S subunit. This chain is Small ribosomal subunit protein uS8c (rps8), found in Guillardia theta (Cryptophyte).